The primary structure comprises 485 residues: Glycogen synthase (485 aa).

Lys18 provides a ligand contact to ADP-alpha-D-glucose.

This sequence belongs to the glycosyltransferase 1 family. Bacterial/plant glycogen synthase subfamily.

It carries out the reaction [(1-&gt;4)-alpha-D-glucosyl](n) + ADP-alpha-D-glucose = [(1-&gt;4)-alpha-D-glucosyl](n+1) + ADP + H(+). It functions in the pathway glycan biosynthesis; glycogen biosynthesis. In terms of biological role, synthesizes alpha-1,4-glucan chains using ADP-glucose. In Dechloromonas aromatica (strain RCB), this protein is Glycogen synthase.